A 370-amino-acid polypeptide reads, in one-letter code: DNA primase large subunit PriL (370 aa).

[4Fe-4S] cluster-binding residues include Cys-268, Cys-341, Cys-350, and Cys-354.

It belongs to the eukaryotic-type primase large subunit family. In terms of assembly, heterodimer of a small subunit (PriS) and a large subunit (PriL). [4Fe-4S] cluster serves as cofactor.

In terms of biological role, regulatory subunit of DNA primase, an RNA polymerase that catalyzes the synthesis of short RNA molecules used as primers for DNA polymerase during DNA replication. Stabilizes and modulates the activity of the small subunit, increasing the rate of DNA synthesis, and conferring RNA synthesis capability. The DNA polymerase activity may enable DNA primase to also catalyze primer extension after primer synthesis. May also play a role in DNA repair. This Archaeoglobus fulgidus (strain ATCC 49558 / DSM 4304 / JCM 9628 / NBRC 100126 / VC-16) protein is DNA primase large subunit PriL.